Reading from the N-terminus, the 321-residue chain is Peptidase 1 (321 aa).

Positions 1 to 18 (MKFVLAIASLLVLSTVYA) are cleaved as a signal peptide. Residues 19 to 98 (RPASIKTFEE…LKTQFDLNAE (80 aa)) constitute a propeptide, activation peptide. Intrachain disulfides connect C102-C216, C130-C170, and C164-C202. Residue C133 is part of the active site. A glycan (N-linked (GlcNAc...) asparagine) is linked at N151. Residues H269 and R288 contribute to the active site.

The protein belongs to the peptidase C1 family. As to quaternary structure, monomer.

Its subcellular location is the secreted. It carries out the reaction Broad endopeptidase specificity.. Thiol protease that hydrolyzes proteins, with a preference for Phe or basic residues. The sequence is that of Peptidase 1 (DERF1) from Dermatophagoides farinae (American house dust mite).